Consider the following 966-residue polypeptide: Isoleucine--tRNA ligase (966 aa).

Basic and acidic residues predominate over residues 1–16; sequence MSDDKRAKSDKNEKNK. Positions 1–24 are disordered; it reads MSDDKRAKSDKNEKNKYPVNLLDT. The short motif at 69–79 is the 'HIGH' region element; that stretch reads PYANGDIHIGH. Glu599 serves as a coordination point for L-isoleucyl-5'-AMP. The 'KMSKS' region signature appears at 640–644; it reads KMSKS. Lys643 contributes to the ATP binding site. Zn(2+) contacts are provided by Cys929, Cys932, Cys949, and Cys952.

This sequence belongs to the class-I aminoacyl-tRNA synthetase family. IleS type 1 subfamily. In terms of assembly, monomer. Zn(2+) is required as a cofactor.

The protein localises to the cytoplasm. It catalyses the reaction tRNA(Ile) + L-isoleucine + ATP = L-isoleucyl-tRNA(Ile) + AMP + diphosphate. Catalyzes the attachment of isoleucine to tRNA(Ile). As IleRS can inadvertently accommodate and process structurally similar amino acids such as valine, to avoid such errors it has two additional distinct tRNA(Ile)-dependent editing activities. One activity is designated as 'pretransfer' editing and involves the hydrolysis of activated Val-AMP. The other activity is designated 'posttransfer' editing and involves deacylation of mischarged Val-tRNA(Ile). The chain is Isoleucine--tRNA ligase from Cupriavidus taiwanensis (strain DSM 17343 / BCRC 17206 / CCUG 44338 / CIP 107171 / LMG 19424 / R1) (Ralstonia taiwanensis (strain LMG 19424)).